Consider the following 267-residue polypeptide: NAD(P)H-hydrate epimerase (267 aa).

In terms of domain architecture, YjeF N-terminal spans 27 to 242; the sequence is AQKIDEDLMS…DLEAKFDLQL (216 aa). Position 78–82 (78–82) interacts with (6S)-NADPHX; sequence NQGGD. Residues Gln-79 and Asp-142 each coordinate K(+). Residues 146–152 and Asp-185 each bind (6S)-NADPHX; that span reads GFNFKGD. Ser-188 provides a ligand contact to K(+).

Belongs to the NnrE/AIBP family. The cofactor is K(+).

The protein localises to the cytoplasm. Its subcellular location is the mitochondrion. The catalysed reaction is (6R)-NADHX = (6S)-NADHX. It carries out the reaction (6R)-NADPHX = (6S)-NADPHX. In terms of biological role, catalyzes the epimerization of the S- and R-forms of NAD(P)HX, a damaged form of NAD(P)H that is a result of enzymatic or heat-dependent hydration. This is a prerequisite for the S-specific NAD(P)H-hydrate dehydratase to allow the repair of both epimers of NAD(P)HX. The polypeptide is NAD(P)H-hydrate epimerase (Mycosarcoma maydis (Corn smut fungus)).